The chain runs to 209 residues: MTGKKRSASSSRWLQEHFSDKYVQQAQKKGLRSRAWFKLDEIQQSDKLFKPGMTVVDLGAAPGGWSQYVVTQIGGKGRIIACDLLPMDPIVGVDFLQGDFRDELVMKALLERVGDSKVQVVMSDMAPNMSGTPAVDIPRAMYLVELALEMCRDVLALGGSFVVKVFQGEGFDEYLREIRSLFTKVKVRKPDSSRARSREVYIVATGRKP.

Residues Gly63, Trp65, Asp83, Asp99, and Asp124 each contribute to the S-adenosyl-L-methionine site. Lys164 (proton acceptor) is an active-site residue.

Belongs to the class I-like SAM-binding methyltransferase superfamily. RNA methyltransferase RlmE family.

Its subcellular location is the cytoplasm. It catalyses the reaction uridine(2552) in 23S rRNA + S-adenosyl-L-methionine = 2'-O-methyluridine(2552) in 23S rRNA + S-adenosyl-L-homocysteine + H(+). Its function is as follows. Specifically methylates the uridine in position 2552 of 23S rRNA at the 2'-O position of the ribose in the fully assembled 50S ribosomal subunit. The polypeptide is Ribosomal RNA large subunit methyltransferase E (Shigella dysenteriae serotype 1 (strain Sd197)).